The primary structure comprises 182 residues: Transcriptional repressor NrdR (182 aa).

The segment at 1–24 (MRCPYCGGLDTQVRDSRPTEDNTA) is disordered. A zinc finger lies at 3-34 (CPYCGGLDTQVRDSRPTEDNTAIRRRRICPDC). Over residues 12-24 (QVRDSRPTEDNTA) the composition is skewed to basic and acidic residues. One can recognise an ATP-cone domain in the interval 49 to 139 (LMVLKRSGRR…VYRNFREAKD (91 aa)). A disordered region spans residues 146 to 182 (ELSQPELAQSDDVKAEGGAEGGRDKPKAAGKPPRSAE). Residues 156–172 (DDVKAEGGAEGGRDKPK) are compositionally biased toward basic and acidic residues.

The protein belongs to the NrdR family. It depends on Zn(2+) as a cofactor.

Its function is as follows. Negatively regulates transcription of bacterial ribonucleotide reductase nrd genes and operons by binding to NrdR-boxes. The sequence is that of Transcriptional repressor NrdR from Xanthobacter autotrophicus (strain ATCC BAA-1158 / Py2).